The sequence spans 234 residues: HTH-type transcriptional regulator MT1864 (234 aa).

In terms of domain architecture, HTH tetR-type spans 15-75 (EQIEAKIVEL…LLLVDAYSDL (61 aa)). The H-T-H motif DNA-binding region spans 38–57 (SLRAIARNLGMVSSAVYRYV).

Homodimer.

The protein resides in the cytoplasm. Its function is as follows. May participate in the regulatory network that controls the expression of MmpL lipid transporters. This chain is HTH-type transcriptional regulator MT1864, found in Mycobacterium tuberculosis (strain CDC 1551 / Oshkosh).